Reading from the N-terminus, the 136-residue chain is MSTAKLDDSTQRPLYGERIIEESKIICFENPNKKRIYEISIQLPEFTCKCPFSGYPDFAKLNIIYQPNLSVYELKSLKLYINNFRDIKISHEEVVNRIMDDLVNEGSPHWIHLNAAFNPRGNVSMQLDIFSGQKRN.

Residue Cys-50 is the Thioimide intermediate of the active site. Asp-57 acts as the Proton donor in catalysis. Residues 72-74 (YEL) and 91-92 (HE) contribute to the substrate site.

Belongs to the GTP cyclohydrolase I family. QueF type 1 subfamily.

The protein resides in the cytoplasm. It catalyses the reaction 7-aminomethyl-7-carbaguanine + 2 NADP(+) = 7-cyano-7-deazaguanine + 2 NADPH + 3 H(+). It participates in tRNA modification; tRNA-queuosine biosynthesis. In terms of biological role, catalyzes the NADPH-dependent reduction of 7-cyano-7-deazaguanine (preQ0) to 7-aminomethyl-7-deazaguanine (preQ1). The chain is NADPH-dependent 7-cyano-7-deazaguanine reductase from Prochlorococcus marinus (strain MIT 9312).